A 139-amino-acid chain; its full sequence is D-ribose pyranase (139 aa).

The Proton donor role is filled by histidine 20. Residues aspartate 28, histidine 106, and 128-130 (YAN) each bind substrate.

It belongs to the RbsD / FucU family. RbsD subfamily. Homodecamer.

It is found in the cytoplasm. It catalyses the reaction beta-D-ribopyranose = beta-D-ribofuranose. Its pathway is carbohydrate metabolism; D-ribose degradation; D-ribose 5-phosphate from beta-D-ribopyranose: step 1/2. Catalyzes the interconversion of beta-pyran and beta-furan forms of D-ribose. The chain is D-ribose pyranase from Actinobacillus pleuropneumoniae serotype 7 (strain AP76).